The chain runs to 215 residues: Sodium channel regulatory subunit beta-3 (215 aa).

A signal peptide spans 1–24; the sequence is MPAFNRLLPLASLVLIYWVRVCFP. One can recognise an Ig-like C2-type domain in the interval 25–138; it reads VCVEVPSETE…EAHRPFVKTT (114 aa). Over 25–156 the chain is Extracellular; the sequence is VCVEVPSETE…EEAGEDFTSV (132 aa). Intrachain disulfides connect cysteine 26–cysteine 48 and cysteine 45–cysteine 120. Residues asparagine 95, asparagine 109, asparagine 113, and asparagine 121 are each glycosylated (N-linked (GlcNAc...) asparagine). A helical membrane pass occupies residues 157-178; that stretch reads VSEIMMYILLVFLTLWLFIEMI. Residues 179–215 lie on the Cytoplasmic side of the membrane; sequence YCYRKVSKAEEAAQENASDYLAIPSENKENSVVPVEE.

It belongs to the sodium channel auxiliary subunit SCN3B (TC 8.A.17) family. As to quaternary structure, a voltage-gated sodium (Nav) channel consists of an ion-conducting pore-forming alpha subunit functional on its own that is regulated by one or more beta subunits. Forms homodimers and homotrimers. SCN3B is non-covalently associated with alpha subunits and induces the formation of alpha subunit oligomers, including trimers. Interacts with SCN5A/Nav1.5; regulatory subunit of SCN5A/Nav1.5. Interacts with SCN7A/Nav2.1; probable regulatory subunit of SCN7A/Nav2.1. Interacts with SCN10A; regulatory subunit of SCN10A/Nav1.8. Interacts with NFASC; probably involved in targeting the sodium channels to the nodes of Ranvier. Intramolecular disulfide bonds favor the voltage-gated sodium channel oligomeric complex assembly. In terms of processing, N-glycosylated. In terms of tissue distribution, expressed broadly in neurons in the central and peripheral nervous systems, but not in glia and most non-neuronal cells. Weak detection in lung and adrenal gland.

It localises to the cell membrane. Regulatory subunit of multiple voltage-gated sodium (Nav) channels directly mediating the depolarization of excitable membranes. Navs, also called VGSCs (voltage-gated sodium channels) or VDSCs (voltage-dependent sodium channels), operate by switching between closed and open conformations depending on the voltage difference across the membrane. In the open conformation they allow Na(+) ions to selectively pass through the pore, along their electrochemical gradient. The influx of Na+ ions provokes membrane depolarization, initiating the propagation of electrical signals throughout cells and tissues. The accessory beta subunits participate in localization and functional modulation of the Nav channels. Voltage-gated sodium channels regulatory subunit that modulates channel gating kinetics. Modulates the activity of SCN2A/Nav1.2, causing a hyperpolarizing shift in the voltage-dependence of inactivation and increasing the fraction of channels operating in the fast gating mode. Also able to induce unique persistent SCN2A/Nav1.2-mediated sodium currents. Could modulate the activity of SCN10A/Nav1.8. This Rattus norvegicus (Rat) protein is Sodium channel regulatory subunit beta-3.